The sequence spans 1595 residues: DNA-directed RNA polymerase subunit beta'' (1595 aa).

Residues Cys216, Cys286, Cys294, and Cys297 each contribute to the Zn(2+) site.

Belongs to the RNA polymerase beta' chain family. RpoC2 subfamily. As to quaternary structure, in plastids the minimal PEP RNA polymerase catalytic core is composed of four subunits: alpha, beta, beta', and beta''. When a (nuclear-encoded) sigma factor is associated with the core the holoenzyme is formed, which can initiate transcription. Requires Zn(2+) as cofactor.

It localises to the plastid. The protein localises to the chloroplast. It carries out the reaction RNA(n) + a ribonucleoside 5'-triphosphate = RNA(n+1) + diphosphate. In terms of biological role, DNA-dependent RNA polymerase catalyzes the transcription of DNA into RNA using the four ribonucleoside triphosphates as substrates. The protein is DNA-directed RNA polymerase subunit beta'' of Bigelowiella natans (Pedinomonas minutissima).